The sequence spans 60 residues: Cytotoxin SP15a (60 aa).

4 disulfide bridges follow: cysteine 3-cysteine 21, cysteine 14-cysteine 38, cysteine 42-cysteine 53, and cysteine 54-cysteine 59.

It belongs to the three-finger toxin family. Short-chain subfamily. Type IA cytotoxin sub-subfamily. As to quaternary structure, monomer in solution; Homodimer and oligomer in the presence of negatively charged lipids forming a pore with a size ranging between 20 and 30 Angstroms. Expressed by the venom gland.

Its subcellular location is the secreted. It is found in the target cell membrane. Shows cytolytic activity on many different cells by forming pore in lipid membranes. In vivo, increases heart rate or kills the animal by cardiac arrest. In addition, it binds to heparin with high affinity, interacts with Kv channel-interacting protein 1 (KCNIP1) in a calcium-independent manner, and binds to integrin alpha-V/beta-3 (ITGAV/ITGB3) with moderate affinity. This is Cytotoxin SP15a from Naja atra (Chinese cobra).